A 636-amino-acid polypeptide reads, in one-letter code: Transcription termination factor FttA (636 aa).

A KHa region spans residues Glu4–Arg72. A KHb region spans residues Lys73 to Pro140. Positions Asn181 to Pro383 are metallo-beta-lactamase N-terminus. Zn(2+)-binding residues include His242, His244, Asp246, His247, His329, and Asp352. Positions Gln384 to Ser577 are beta-Casp. Residues Gly578 to Lys636 are metallo-beta-lactamase C-terminus. His603 contributes to the Zn(2+) binding site.

Belongs to the metallo-beta-lactamase superfamily. RNA-metabolizing metallo-beta-lactamase-like family. FttA subfamily. As to quaternary structure, homodimer. Interacts with RNA polymerase (RNAP), interacts with the Spt4-Spt5 complex. Zn(2+) is required as a cofactor.

Its function is as follows. Terminates transcription on the whole genome. Termination is linked to FttA-mediated RNA cleavage and does not require NTP hydrolysis. Cleaves endonucleolytically at the RNA exit channel of RNA polymerase (RNAP); the 5'-3' exonuclease activity of this protein degrades the nascent RNA released from RNAP. Functionally, terminates transcription genome-wide in M.maripaludis. Restores wild-type growth to a strain of Methanococcus maripaludis depleted for this gene at 22 degrees Celsius and prevents transcriptional read-through. Transcription termination is most effective in vivo on RNAs with more than one U4-tract in their 3'-ends. Has endonuclease activity after U-rich tracts in transcription termination sequences. This chain is Transcription termination factor FttA, found in Lokiarchaeum sp. (strain GC14_75).